We begin with the raw amino-acid sequence, 308 residues long: Phosphoribosylaminoimidazole-succinocarboxamide synthase (308 aa).

This sequence belongs to the SAICAR synthetase family.

The catalysed reaction is 5-amino-1-(5-phospho-D-ribosyl)imidazole-4-carboxylate + L-aspartate + ATP = (2S)-2-[5-amino-1-(5-phospho-beta-D-ribosyl)imidazole-4-carboxamido]succinate + ADP + phosphate + 2 H(+). The protein operates within purine metabolism; IMP biosynthesis via de novo pathway; 5-amino-1-(5-phospho-D-ribosyl)imidazole-4-carboxamide from 5-amino-1-(5-phospho-D-ribosyl)imidazole-4-carboxylate: step 1/2. This Xylella fastidiosa (strain Temecula1 / ATCC 700964) protein is Phosphoribosylaminoimidazole-succinocarboxamide synthase.